The primary structure comprises 152 residues: Mitochondrial fission 1 protein (152 aa).

N-acetylmethionine is present on Met1. The Cytoplasmic portion of the chain corresponds to 1–122 (MEAVLNELVS…LIDKAMKKDG (122 aa)). The residue at position 10 (Ser10) is a Phosphoserine. The TPR repeat unit spans residues 71 to 104 (RDYVFYLAVGNYRLKEYEKALKYVRGLLQTEPQN). Residues 123–143 (LVGMAIVGGMALGVAGLAGLI) traverse the membrane as a helical segment. The Mitochondrial intermembrane segment spans residues 144–152 (GLAVSKSKS).

Belongs to the FIS1 family. Interacts with DNM1L/DLP1 through the TPR region; may form part of a larger protein complex at the endoplasmic reticulum-mitochondrial interface during mitochondrial fission. Interacts with MARCHF5. Interacts with MIEF1. Interacts with PEX11A, PEX11B and PEX11G. Ubiquitinated by MARCHF5.

The protein localises to the mitochondrion outer membrane. Its subcellular location is the peroxisome membrane. Involved in the fragmentation of the mitochondrial network and its perinuclear clustering. Plays a minor role in the recruitment and association of the fission mediator dynamin-related protein 1 (DNM1L) to the mitochondrial surface and mitochondrial fission. May not be essential for the assembly of functional fission complexes and the subsequent membrane scission event. Also mediates peroxisomal fission. May act when the products of fission are directed toward mitochondrial homeostasis, mitophagy, or apoptosis. Can induce cytochrome c release from the mitochondrion to the cytosol, ultimately leading to apoptosis. The sequence is that of Mitochondrial fission 1 protein from Rattus norvegicus (Rat).